The chain runs to 257 residues: Imidazole glycerol phosphate synthase subunit HisF (257 aa).

Catalysis depends on residues Asp11 and Asp130.

This sequence belongs to the HisA/HisF family. In terms of assembly, heterodimer of HisH and HisF.

It localises to the cytoplasm. The enzyme catalyses 5-[(5-phospho-1-deoxy-D-ribulos-1-ylimino)methylamino]-1-(5-phospho-beta-D-ribosyl)imidazole-4-carboxamide + L-glutamine = D-erythro-1-(imidazol-4-yl)glycerol 3-phosphate + 5-amino-1-(5-phospho-beta-D-ribosyl)imidazole-4-carboxamide + L-glutamate + H(+). It functions in the pathway amino-acid biosynthesis; L-histidine biosynthesis; L-histidine from 5-phospho-alpha-D-ribose 1-diphosphate: step 5/9. Its function is as follows. IGPS catalyzes the conversion of PRFAR and glutamine to IGP, AICAR and glutamate. The HisF subunit catalyzes the cyclization activity that produces IGP and AICAR from PRFAR using the ammonia provided by the HisH subunit. This chain is Imidazole glycerol phosphate synthase subunit HisF, found in Prochlorococcus marinus (strain SARG / CCMP1375 / SS120).